The following is a 545-amino-acid chain: CTP synthase (545 aa).

Residues 1-266 are amidoligase domain; the sequence is MATNYIFVTG…DDFVCERFRL (266 aa). Ser14 serves as a coordination point for CTP. Ser14 lines the UTP pocket. ATP is bound by residues 15–20 and Asp72; that span reads SLGKGI. Positions 72 and 140 each coordinate Mg(2+). CTP-binding positions include 147–149, 187–192, and Lys223; these read DIE and KTKPTQ. UTP is bound by residues 187 to 192 and Lys223; that span reads KTKPTQ. 239–241 contacts ATP; that stretch reads KDV. In terms of domain architecture, Glutamine amidotransferase type-1 spans 291–542; that stretch reads TIGMVGKYTE…VKAAYENHKK (252 aa). Gly352 is an L-glutamine binding site. Catalysis depends on Cys379, which acts as the Nucleophile; for glutamine hydrolysis. Residues 380 to 383, Glu403, and Arg470 contribute to the L-glutamine site; that span reads LGMQ. Catalysis depends on residues His515 and Glu517.

It belongs to the CTP synthase family. Homotetramer.

The catalysed reaction is UTP + L-glutamine + ATP + H2O = CTP + L-glutamate + ADP + phosphate + 2 H(+). It carries out the reaction L-glutamine + H2O = L-glutamate + NH4(+). It catalyses the reaction UTP + NH4(+) + ATP = CTP + ADP + phosphate + 2 H(+). It functions in the pathway pyrimidine metabolism; CTP biosynthesis via de novo pathway; CTP from UDP: step 2/2. Its activity is regulated as follows. Allosterically activated by GTP, when glutamine is the substrate; GTP has no effect on the reaction when ammonia is the substrate. The allosteric effector GTP functions by stabilizing the protein conformation that binds the tetrahedral intermediate(s) formed during glutamine hydrolysis. Inhibited by the product CTP, via allosteric rather than competitive inhibition. Functionally, catalyzes the ATP-dependent amination of UTP to CTP with either L-glutamine or ammonia as the source of nitrogen. Regulates intracellular CTP levels through interactions with the four ribonucleotide triphosphates. This Haemophilus influenzae (strain ATCC 51907 / DSM 11121 / KW20 / Rd) protein is CTP synthase.